The following is a 142-amino-acid chain: gSG7 salivary protein (142 aa).

Residues 1–26 (MAVRMTVILPLAMALICLMQAEPATA) form the signal peptide. Cystine bridges form between cysteine 84/cysteine 139 and cysteine 107/cysteine 117.

As to quaternary structure, associates with activated host C3-convertase complex C3bBb (C3-CFB). Interacts with host properdin (CFP), a regulator of the alternate pathway of complement. Female salivary gland (at protein level).

It localises to the secreted. Functionally, salivary protein that potently inhibits the alternative pathway of complement system activation in the host while having no inhibitory effect on the classical or lectin pathways. Binds and stabilizes activated host C3-convertase complex C3bBb (C3-CFB) and inhibits its convertase activity. Enhances accumulation of C3bBb on immobilized properdin. The chain is gSG7 salivary protein from Anopheles albimanus (New world malaria mosquito).